A 372-amino-acid polypeptide reads, in one-letter code: Ca(2+)/H(+) antiporter (372 aa).

11 helical membrane passes run 7–27, 29–49, 62–82, 94–114, 134–154, 162–182, 222–242, 251–271, 294–314, 320–340, and 352–372; these read IFLV…LGWG, TTVF…MGTA, GGLL…YIAL, LTGS…FLGG, MNLG…STGV, LSVA…VFSM, LWTG…ELLV, SLGL…GNAA, GSSL…GWAI, LNFN…VNSI, and ILLL…PTLV.

Belongs to the Ca(2+):cation antiporter (CaCA) (TC 2.A.19) family. Cation/proton exchanger (CAX) subfamily.

The protein localises to the cell inner membrane. Ca(+)/H(+) antiporter that extrudes calcium in exchange for external protons. Plays an important role in salt tolerance. Does not transport sodium or lithium. This Synechocystis sp. (strain ATCC 27184 / PCC 6803 / Kazusa) protein is Ca(2+)/H(+) antiporter.